Consider the following 462-residue polypeptide: Phospho-2-dehydro-3-deoxyheptonate aldolase AroG (462 aa).

Cys87 is a Mn(2+) binding site. Residues Arg126, 283-284 (ER), Lys306, and Arg337 contribute to the phosphoenolpyruvate site. His369, Glu411, and Asp441 together coordinate Mn(2+).

In terms of assembly, homodimer. Interacts with Rv0948c. Mn(2+) serves as cofactor. Co(2+) is required as a cofactor. The cofactor is Cd(2+).

The catalysed reaction is D-erythrose 4-phosphate + phosphoenolpyruvate + H2O = 7-phospho-2-dehydro-3-deoxy-D-arabino-heptonate + phosphate. Its pathway is metabolic intermediate biosynthesis; chorismate biosynthesis; chorismate from D-erythrose 4-phosphate and phosphoenolpyruvate: step 1/7. Feedback inhibited by tryptophan, tyrosine, phenylalanine and chorismate. Its function is as follows. Catalyzes an aldol-like condensation reaction between phosphoenolpyruvate (PEP) and D-erythrose 4-phosphate (E4P) to generate 3-deoxy-D-arabino-heptulosonate 7-phosphate (DAH7P) and inorganic phosphate. The protein is Phospho-2-dehydro-3-deoxyheptonate aldolase AroG (aroG) of Mycobacterium tuberculosis (strain ATCC 25618 / H37Rv).